The following is an 84-amino-acid chain: Delta-conotoxin-like MVIB (84 aa).

Residues 1–22 form the signal peptide; it reads MKLTCVMIVAVLFLTAWTFVTA. The propeptide occupies 23–51; sequence DDSRYGLKDLFPKERHEMKNPEASKLNQR. 3 disulfides stabilise this stretch: Cys54–Cys69, Cys61–Cys73, and Cys68–Cys77. Position 65 is a 4-hydroxyproline (Pro65). Ser83 carries the post-translational modification Serine amide.

The protein belongs to the conotoxin O1 superfamily. Expressed by the venom duct.

The protein localises to the secreted. In terms of biological role, delta-conotoxins bind to site 6 of voltage-gated sodium channels (Nav) and inhibit the inactivation process. This is Delta-conotoxin-like MVIB from Conus magus (Magical cone).